Reading from the N-terminus, the 2073-residue chain is Dedicator of cytokinesis protein 11 (2073 aa).

Ser-12 is subject to Phosphoserine. Thr-16 is subject to Phosphothreonine. Phosphoserine occurs at positions 23 and 161. Positions 165–272 (GVIKQGWLHK…WLITLKKIIQ (108 aa)) constitute a PH domain. Tyr-248 carries the post-translational modification Phosphotyrosine. Residues Ser-306, Ser-440, and Ser-445 each carry the phosphoserine modification. The 179-residue stretch at 640–818 (KNHLYVYPLQ…PLLKIKSHLE (179 aa)) folds into the C2 DOCK-type domain. The interval 1226–1267 (FQNGHGIKREDSRGSLIPEGATGFPDQGNTGENTRQSSTRSS) is disordered. Phosphoserine occurs at positions 1237 and 1240. The 428-residue stretch at 1609–2036 (KSYASTPELR…LSDIIHEQIL (428 aa)) folds into the DOCKER domain.

Belongs to the DOCK family. Interacts with CDC42.

Functionally, guanine nucleotide-exchange factor (GEF) that activates CDC42 by exchanging bound GDP for free GTP. Required for marginal zone (MZ) B-cell development, is associated with early bone marrow B-cell development, MZ B-cell formation, MZ B-cell number and marginal metallophilic macrophages morphology. Facilitates filopodia formation through the activation of CDC42. The protein is Dedicator of cytokinesis protein 11 of Homo sapiens (Human).